The sequence spans 745 residues: Elongation factor G, mitochondrial (745 aa).

A mitochondrion-targeting transit peptide spans Met-1–Arg-15. In terms of domain architecture, tr-type G spans Asp-40–Gly-317. GTP contacts are provided by residues Ala-49 to Thr-56, Asp-116 to His-120, and Asn-170 to Asp-173.

The protein belongs to the TRAFAC class translation factor GTPase superfamily. Classic translation factor GTPase family. EF-G/EF-2 subfamily.

It is found in the mitochondrion. The protein operates within protein biosynthesis; polypeptide chain elongation. Functionally, mitochondrial GTPase that catalyzes the GTP-dependent ribosomal translocation step during translation elongation. During this step, the ribosome changes from the pre-translocational (PRE) to the post-translocational (POST) state as the newly formed A-site-bound peptidyl-tRNA and P-site-bound deacylated tRNA move to the P and E sites, respectively. Catalyzes the coordinated movement of the two tRNA molecules, the mRNA and conformational changes in the ribosome. Essential during development as it acts as a retrograde signal from mitochondria to the nucleus to slow down cell proliferation if mitochondrial energy output is low. In Drosophila ananassae (Fruit fly), this protein is Elongation factor G, mitochondrial (ico).